The sequence spans 334 residues: MKEKIAYLGMGIWGFCLASLLAHKGYRVVGWARNPELVAQLQTEHRHPQAPDMPIHPNLSFTTDMVEAVDGASMIVEAVSSAGIRPVSKQLKTITDLKVPFVITSKGIEQHTGLLLSEIVVEIFGSQASRYLGYLSGPSIAREVLKGCPCSVVISAYDPDTLKKIHHAFLTPKFRVYPNSDLKGVALGGALKNIIAIACGISDGFQFGDNAKSGLVTRGLHEIRKFATIMDCRPDTLYGLAGLGDLCTTCFSSLSRNTRFGKLIAQGFTLEQAKAEIGMVVEGAYTALSAYQIAKHHKIDMPITTGIYRVLYENLDIKEGIAALLQRNTKEEYL.

Trp13, Arg33, and Lys106 together coordinate NADPH. 3 residues coordinate sn-glycerol 3-phosphate: Lys106, Gly137, and Ser139. Ala141 serves as a coordination point for NADPH. Sn-glycerol 3-phosphate-binding residues include Lys192, Asp245, Ser255, Arg256, and Asn257. The active-site Proton acceptor is Lys192. Arg256 lines the NADPH pocket. NADPH contacts are provided by Val280 and Glu282.

Belongs to the NAD-dependent glycerol-3-phosphate dehydrogenase family.

Its subcellular location is the cytoplasm. It carries out the reaction sn-glycerol 3-phosphate + NAD(+) = dihydroxyacetone phosphate + NADH + H(+). The enzyme catalyses sn-glycerol 3-phosphate + NADP(+) = dihydroxyacetone phosphate + NADPH + H(+). Its pathway is membrane lipid metabolism; glycerophospholipid metabolism. Functionally, catalyzes the reduction of the glycolytic intermediate dihydroxyacetone phosphate (DHAP) to sn-glycerol 3-phosphate (G3P), the key precursor for phospholipid synthesis. This Chlamydia abortus (strain DSM 27085 / S26/3) (Chlamydophila abortus) protein is Glycerol-3-phosphate dehydrogenase [NAD(P)+].